A 597-amino-acid chain; its full sequence is Arginine--tRNA ligase (597 aa).

The 'HIGH' region signature appears at 137–147 (PNIAKEMHVGH).

It belongs to the class-I aminoacyl-tRNA synthetase family. Monomer.

It localises to the cytoplasm. The catalysed reaction is tRNA(Arg) + L-arginine + ATP = L-arginyl-tRNA(Arg) + AMP + diphosphate. The protein is Arginine--tRNA ligase of Parasynechococcus marenigrum (strain WH8102).